The following is a 459-amino-acid chain: Argininosuccinate lyase (459 aa).

Belongs to the lyase 1 family. Argininosuccinate lyase subfamily.

The protein localises to the cytoplasm. It catalyses the reaction 2-(N(omega)-L-arginino)succinate = fumarate + L-arginine. It functions in the pathway amino-acid biosynthesis; L-arginine biosynthesis; L-arginine from L-ornithine and carbamoyl phosphate: step 3/3. This is Argininosuccinate lyase from Prochlorococcus marinus subsp. pastoris (strain CCMP1986 / NIES-2087 / MED4).